The following is a 356-amino-acid chain: Heparan sulfate 2-O-sulfotransferase 1 (356 aa).

Over 1-11 the chain is Cytoplasmic; sequence MGLLRIMMPPK. A helical; Signal-anchor for type II membrane protein membrane pass occupies residues 12-28; the sequence is LQLLAVVAFAVAMLFLE. Residues 24–51 adopt a coiled-coil conformation; it reads MLFLENQIQKLEESRSKLERAIARHEVR. Topologically, residues 29 to 356 are lumenal; it reads NQIQKLEESR…FYEKIYPKSN (328 aa). 6 residues coordinate adenosine 3',5'-bisphosphate: K83, T84, A85, S86, T87, and S88. N-linked (GlcNAc...) asparagine glycosylation is found at N108 and N127. Residues H140 and H142 contribute to the active site. Residues R164 and S172 each contribute to the adenosine 3',5'-bisphosphate site. 2 disulfides stabilise this stretch: C201-C209 and C222-C228. Adenosine 3',5'-bisphosphate is bound by residues Y279, S285, T290, and K293.

The protein belongs to the sulfotransferase 3 family. Homotrimer. Interacts with the C5-epimerase GLCE. N-glycosylated.

The protein localises to the golgi apparatus membrane. Its function is as follows. Catalyzes the transfer of a sulfo group from 3'-phospho-5'-adenylyl sulfate (PAPS) to the 2-OH position of iduronic acid (IdoA) or glucuronic acid (GlcA) within the heparan sulfate (HS) chain and participates in HS biosynthesis. Required for metanephric development of kidney formation, suggesting that 2-O-sulfation within HS is essential for signaling between ureteric bud and metanephric mesenchyme. This chain is Heparan sulfate 2-O-sulfotransferase 1, found in Homo sapiens (Human).